The chain runs to 930 residues: Protein translocase subunit SecA (930 aa).

ATP contacts are provided by residues Gln87, 105-109 (GEGKT), and Asp515. Residues Cys914, Cys916, Cys925, and His926 each coordinate Zn(2+).

The protein belongs to the SecA family. As to quaternary structure, monomer and homodimer. Part of the essential Sec protein translocation apparatus which comprises SecA, SecYEG and auxiliary proteins SecDF-YajC and YidC. Zn(2+) is required as a cofactor.

It is found in the cell inner membrane. The protein resides in the cytoplasm. The catalysed reaction is ATP + H2O + cellular proteinSide 1 = ADP + phosphate + cellular proteinSide 2.. Its function is as follows. Part of the Sec protein translocase complex. Interacts with the SecYEG preprotein conducting channel. Has a central role in coupling the hydrolysis of ATP to the transfer of proteins into and across the cell membrane, serving both as a receptor for the preprotein-SecB complex and as an ATP-driven molecular motor driving the stepwise translocation of polypeptide chains across the membrane. The polypeptide is Protein translocase subunit SecA (Burkholderia vietnamiensis (strain G4 / LMG 22486) (Burkholderia cepacia (strain R1808))).